Reading from the N-terminus, the 107-residue chain is Ribonuclease P protein component 4 (107 aa).

4 residues coordinate Zn(2+): C66, C69, C92, and C95.

The protein belongs to the eukaryotic/archaeal RNase P protein component 4 family. Consists of a catalytic RNA component and at least 4-5 protein subunits. It depends on Zn(2+) as a cofactor.

It localises to the cytoplasm. It carries out the reaction Endonucleolytic cleavage of RNA, removing 5'-extranucleotides from tRNA precursor.. Its function is as follows. Part of ribonuclease P, a protein complex that generates mature tRNA molecules by cleaving their 5'-ends. The sequence is that of Ribonuclease P protein component 4 from Methanosarcina acetivorans (strain ATCC 35395 / DSM 2834 / JCM 12185 / C2A).